The following is a 639-amino-acid chain: Polyvinylalcohol dehydrogenase (639 aa).

The signal sequence occupies residues 1–33 (MQQNIERNQVSMTTSRFVWGAVMALVALGSASA). In terms of domain architecture, Cytochrome c spans 36–152 (LNLPDGAALY…TPDQWNGWGA (117 aa)). Heme contacts are provided by Cys49, Cys52, and His53.

This sequence belongs to the bacterial PQQ dehydrogenase family. In terms of assembly, monomer. Pyrroloquinoline quinone is required as a cofactor.

The protein resides in the cytoplasm. It carries out the reaction a polyvinyl alcohol + 2n Fe(III)-[cytochrome c] = an oxidized polyvinyl alcohol + 2n Fe(II)-[cytochrome c] + 2n H(+). Its function is as follows. Catalyzes the oxidation of polyvinyl alcohol (PVA) in the polyvinyl alcohol degradation pathway. In Pseudomonas sp, this protein is Polyvinylalcohol dehydrogenase (pvaA).